The following is a 435-amino-acid chain: Protein CHLOROPLAST IMPORT APPARATUS 2 (435 aa).

The N-terminal 59 residues, Met1 to Arg59, are a transit peptide targeting the chloroplast. Disordered regions lie at residues Lys21–Asn66 and Ala412–Arg435. Low complexity predominate over residues Ser29–Ser49. Residues Arg56–Pro65 are compositionally biased toward basic residues. Residues Arg383–Arg425 enclose the CCT domain.

In terms of tissue distribution, expressed in leaves and young flower buds.

It localises to the plastid. The protein resides in the chloroplast. The protein localises to the nucleus. Functionally, responsible for specific up-regulation of the translocon genes TOC33 and TOC75 in leaves. Involved in the general chloroplast protein import pathway regulation, including protein import and protein translation efficiencies. The protein is Protein CHLOROPLAST IMPORT APPARATUS 2 (CIA2) of Arabidopsis thaliana (Mouse-ear cress).